Consider the following 475-residue polypeptide: Alpha,alpha-trehalose-phosphate synthase [UDP-forming] (475 aa).

Residues Tyr93 and Asp147 each coordinate D-glucose 6-phosphate. UDP is bound by residues Arg285 and Lys290. Positions 285 and 290 each coordinate UDP-alpha-D-glucose. Arg323 serves as a coordination point for D-glucose 6-phosphate. Residue 384–392 (DGMNLVSYE) participates in UDP-alpha-D-glucose binding. 388–392 (LVSYE) is a UDP binding site.

Belongs to the glycosyltransferase 20 family.

The enzyme catalyses D-glucose 6-phosphate + UDP-alpha-D-glucose = alpha,alpha-trehalose 6-phosphate + UDP + H(+). Its pathway is carbohydrate biosynthesis. Functionally, synthase catalytic subunit of the trehalose synthase complex that catalyzes the production of trehalose from glucose-6-phosphate and UDP-alpha-D-glucose in a two step process. This chain is Alpha,alpha-trehalose-phosphate synthase [UDP-forming], found in Pichia angusta (Yeast).